Here is a 475-residue protein sequence, read N- to C-terminus: Ankyrin repeat, SAM and basic leucine zipper domain-containing protein 1 (475 aa).

The segment covering Met1 to Ala10 has biased composition (low complexity). Residues Met1–Asp23 are disordered. A phosphoserine mark is found at Ser17, Ser18, and Ser20. ANK repeat units follow at residues Glu45–Ser74, Tyr78–Phe107, Asp110–Val144, Arg148–Thr177, Asn181–Leu210, and Asp214–Gly243. Residues Ser272 to Glu334 enclose the SAM domain.

Interacts with DDX4, PIWIL1, RANBP9 and TDRD1.

It localises to the cytoplasm. Its function is as follows. Plays a central role during spermatogenesis by repressing transposable elements and preventing their mobilization, which is essential for the germline integrity. Acts via the piRNA metabolic process, which mediates the repression of transposable elements during meiosis by forming complexes composed of piRNAs and Piwi proteins and governs the methylation and subsequent repression of transposons. Its association with pi-bodies suggests a participation in the primary piRNAs metabolic process. Required prior to the pachytene stage to facilitate the production of multiple types of piRNAs, including those associated with repeats involved in the regulation of retrotransposons. May act by mediating protein-protein interactions during germ cell maturation. This Otolemur garnettii (Small-eared galago) protein is Ankyrin repeat, SAM and basic leucine zipper domain-containing protein 1 (ASZ1).